We begin with the raw amino-acid sequence, 652 residues long: DNA mismatch repair protein MutL (652 aa).

Disordered stretches follow at residues 357–377 (LGANDRQGSHSSNTPTLNYPS) and 425–457 (PDKGSSAQVQNTSGSDQASAQKHETTTLQNSTD). Polar residues predominate over residues 365–375 (SHSSNTPTLNY).

Belongs to the DNA mismatch repair MutL/HexB family.

This protein is involved in the repair of mismatches in DNA. It is required for dam-dependent methyl-directed DNA mismatch repair. May act as a 'molecular matchmaker', a protein that promotes the formation of a stable complex between two or more DNA-binding proteins in an ATP-dependent manner without itself being part of a final effector complex. The sequence is that of DNA mismatch repair protein MutL from Colwellia psychrerythraea (strain 34H / ATCC BAA-681) (Vibrio psychroerythus).